The following is a 195-amino-acid chain: BAG family molecular chaperone regulator 1A (195 aa).

Positions 6–72 (STVTIHYGNQ…KLGLKNHSKI (67 aa)) constitute a Ubiquitin-like domain. Positions 78 to 98 (HKQQRGSKEKDTVEPAPKAEA) are disordered. The span at 83-98 (GSKEKDTVEPAPKAEA) shows a compositional bias: basic and acidic residues. Positions 109–190 (EIKAIDQYVD…KMLDHVDQTS (82 aa)) constitute a BAG domain.

Binds to the ATPase domain of HSP70/HSC chaperones.

Inhibits the chaperone activity of HSP70/HSC70 by promoting substrate release. The sequence is that of BAG family molecular chaperone regulator 1A (bag101) from Schizosaccharomyces pombe (strain 972 / ATCC 24843) (Fission yeast).